The primary structure comprises 203 residues: MAHGPRYRVPFRRRREGKTNYRKRLKLLKSGKPRLVVRKSLNHHIAQIIVYDPKGDRTLVSAHTRELIRDFGWKGHCGNTPSAYLLGLLIGYKAKQAGIEEAILDIGLHPPVRGSSVFAVLKGAVDAGLNVPHSPEIFPDEYRIRGEHIAEYAKMLKEQDEEKFRRQFGGYLVKGLDPEKLPEHFEEVKARIIEKFEGEGARE.

This sequence belongs to the universal ribosomal protein uL18 family. In terms of assembly, part of the 50S ribosomal subunit. Contacts the 5S and 23S rRNAs.

Its function is as follows. This is one of the proteins that bind and probably mediate the attachment of the 5S RNA into the large ribosomal subunit, where it forms part of the central protuberance. The polypeptide is Large ribosomal subunit protein uL18 (Pyrococcus furiosus (strain ATCC 43587 / DSM 3638 / JCM 8422 / Vc1)).